The primary structure comprises 1154 residues: MAGAGYQHHPPGGAAVGTSAVSPTAAGPGEDSSDSEAEQGGPQKLIRKVSTSGQIRTKTSIKEGQLLKQTSSFQRWKKRYFKLRGRTLYYAKDSKSLIFDEVDLSDASVAEASTKNANNSFTIITPFRRLMLCAENRKEMEDWISSLKSVQSREPYEVAQFNVEHFSGMHNWYACSHARPTFCNVCRESLSGVTSHGLSCEVCKFKAHKRCAVRATNNCKWTTLASIGKDIIEDEDGVAMPHQWLEGNLPVSAKCAVCDKTCGSVLRLQDWKCLWCKAMVHTACKDLYHPVCPLGQCKVSIIPPIALNSTDSDGFCRATFSFCVSPLLVFVNSKSGDNQGVKFLRRFKQLLNPAQVFDLMNGGPHLGLRLFQKFDNFRILVCGGDGSVGWVLSEIDKLNLNKQCQLGVLPLGTGNDLARVLGWGGSYDDDTQLPQILEKLERASTKMLDRWSIMTYELKLPAKASLLPEPPEASGGFYMTIYEDSVANHLTKILNSDEHAVVISSAKILCETVKDFVAKVEKAQDKTLENTVVAEAVANKCSVLNEKLEQLLQALHADAQASRVPPGVGPAIPEEDAVESSSEESLGESKDQLVNDIAKPSSQKAVKPREIMLRANSLKKAVRQVIEEAGKVMDEQTVQPCEPVSPSCDYDSPEADDSKDNDTKESPAAKSTSQAPEAQAIRGHFQTDSVAGSAMATTKENLPVLNTRIICPGLRAGLAASIAGSSIINKMLLANIDPFGATPFIDPDLDSLDGYSEKCVMNNYFGIGLDAKISLEFNNKREEHPEKCRSRTKNLMWYGVLGTRELLQRSYKNLEQRVQLECDGQYIPLPSLQGIAVLNIPSYAGGTNFWGGTKEDDIFAAPSFDDKILEVVAVFDSVQMAVSRVIKLQHHRIAQCRTVKITIFGDEGVPVQVDGEAWVQPPGIIKIVHKNRAQMLTRDRAFESTLKSWEDKQKCDSGKPVLRTNLYIHPAADLATEEVSQMRLCSQAAEELITRICDAATIHCLLGAGTGSSVNACSHALNKANPRFPESLTRDTATEIAINVKALYNETESLLVGRVPLQLESPHEERVSSALHSVEVELQKLTEIPWLYYILRPNEDEEPPMDCTKRNSKSTVFRIVPKFKMEKAQKQKTSSQPGPGDTESGSYEANSPGN.

Residues 1 to 54 (MAGAGYQHHPPGGAAVGTSAVSPTAAGPGEDSSDSEAEQGGPQKLIRKVSTSGQ) are disordered. The region spanning 59-152 (TSIKEGQLLK…WISSLKSVQS (94 aa)) is the PH domain. 2 Phorbol-ester/DAG-type zinc fingers span residues 169 to 219 (MHNW…TNNC) and 241 to 292 (PHQW…HPVC). In terms of domain architecture, DAGKc spans 322-457 (FCVSPLLVFV…LDRWSIMTYE (136 aa)). Disordered regions lie at residues 560-608 (QASR…AVKP), 634-678 (DEQT…APEA), and 1123-1154 (FKME…SPGN). Residues 573 to 586 (PEEDAVESSSEESL) show a composition bias toward acidic residues. Residues 656–667 (DDSKDNDTKESP) show a composition bias toward basic and acidic residues. The segment covering 1131-1154 (QKTSSQPGPGDTESGSYEANSPGN) has biased composition (polar residues).

This sequence belongs to the eukaryotic diacylglycerol kinase family. In terms of assembly, interacts with RAF1 and BRAF. Phosphorylated. Phosphorylation does not inhibit catalytic activity. Expressed in a wide variety of tissues. Most abundant in the brain and testis; also found in lung, spleen, and prostate (at protein level).

It is found in the cytoplasm. The protein resides in the cell membrane. The catalysed reaction is a 1,2-diacyl-sn-glycerol + ATP = a 1,2-diacyl-sn-glycero-3-phosphate + ADP + H(+). It catalyses the reaction 1,2-di-(9Z-octadecenoyl)-sn-glycerol + ATP = 1,2-di-(9Z-octadecenoyl)-sn-glycero-3-phosphate + ADP + H(+). It functions in the pathway lipid metabolism; glycerolipid metabolism. Functionally, diacylglycerol kinase that converts diacylglycerol/DAG into phosphatidic acid/phosphatidate/PA and regulates the respective levels of these two bioactive lipids. Thereby, acts as a central switch between the signaling pathways activated by these second messengers with different cellular targets and opposite effects in numerous biological processes. Plays a key role in promoting cell growth. Activates the Ras/B-Raf/C-Raf/MEK/ERK signaling pathway induced by EGF. Regulates the recruitment of RAF1 and BRAF from cytoplasm to membranes and their heterodimerization. This chain is Diacylglycerol kinase eta (DGKH), found in Mesocricetus auratus (Golden hamster).